Here is a 225-residue protein sequence, read N- to C-terminus: Immune-associated nucleotide-binding protein 1 (225 aa).

The AIG1-type G domain occupies cysteine 6–lysine 214. The tract at residues glycine 15–serine 22 is G1. Residue glycine 15–serine 23 coordinates GTP. A G2 region spans residues aspartate 42–arginine 46. Positions aspartate 64 to glycine 67 are G3. Residues threonine 134–aspartate 137 form a G4 region. Residues asparagine 173–lysine 175 are G5. GTP is bound at residue asparagine 174.

The protein belongs to the TRAFAC class TrmE-Era-EngA-EngB-Septin-like GTPase superfamily. AIG1/Toc34/Toc159-like paraseptin GTPase family. IAN subfamily. Mostly expressed in pollen.

In Arabidopsis thaliana (Mouse-ear cress), this protein is Immune-associated nucleotide-binding protein 1.